Consider the following 198-residue polypeptide: Holliday junction branch migration complex subunit RuvA (198 aa).

The segment at 1–63 (MIAYLSGAVR…EDAQLLFGFL (63 aa)) is domain I. Residues 64 to 142 (DTDSLRLFDL…EHLAAGAPVS (79 aa)) form a domain II region. The flexible linker stretch occupies residues 143-150 (AGKAALTS). The interval 150 to 198 (STAGRDAIEALLALGFREPQVRSVVAELLAADPEQSADALIRKGLGKLR) is domain III.

This sequence belongs to the RuvA family. In terms of assembly, homotetramer. Forms an RuvA(8)-RuvB(12)-Holliday junction (HJ) complex. HJ DNA is sandwiched between 2 RuvA tetramers; dsDNA enters through RuvA and exits via RuvB. An RuvB hexamer assembles on each DNA strand where it exits the tetramer. Each RuvB hexamer is contacted by two RuvA subunits (via domain III) on 2 adjacent RuvB subunits; this complex drives branch migration. In the full resolvosome a probable DNA-RuvA(4)-RuvB(12)-RuvC(2) complex forms which resolves the HJ.

The protein resides in the cytoplasm. Its function is as follows. The RuvA-RuvB-RuvC complex processes Holliday junction (HJ) DNA during genetic recombination and DNA repair, while the RuvA-RuvB complex plays an important role in the rescue of blocked DNA replication forks via replication fork reversal (RFR). RuvA specifically binds to HJ cruciform DNA, conferring on it an open structure. The RuvB hexamer acts as an ATP-dependent pump, pulling dsDNA into and through the RuvAB complex. HJ branch migration allows RuvC to scan DNA until it finds its consensus sequence, where it cleaves and resolves the cruciform DNA. The protein is Holliday junction branch migration complex subunit RuvA of Deinococcus geothermalis (strain DSM 11300 / CIP 105573 / AG-3a).